Consider the following 205-residue polypeptide: MMADRTISSPRGPGDFLDGQMLIAMPSMRDERFNRALVYICAHSAEGAMGIVVNQPATHIDFGDLLVQLDVVPATKRIQLPPRAELVKVLRGGPVETGRGFVLHSSDFFLENATLPIDNGICLTASLDILKAIAGGQGPESAVLALGYAGWAPGQLETEIQANGWLHCPADPELIFGESVDAKYDLALRKLGVHPGMLSTDAGHA.

This sequence belongs to the UPF0301 (AlgH) family.

This Azorhizobium caulinodans (strain ATCC 43989 / DSM 5975 / JCM 20966 / LMG 6465 / NBRC 14845 / NCIMB 13405 / ORS 571) protein is UPF0301 protein AZC_0488.